A 774-amino-acid chain; its full sequence is Phosphoribosylformylglycinamidine synthase subunit PurL (774 aa).

H51 is an active-site residue. Y54 and K93 together coordinate ATP. E95 provides a ligand contact to Mg(2+). Substrate-binding positions include 96–99 and R118; that span reads SHNH. H97 acts as the Proton acceptor in catalysis. D119 is a Mg(2+) binding site. Substrate is bound at residue Q242. Residue D270 participates in Mg(2+) binding. A substrate-binding site is contributed by 314 to 316; it reads ESQ. 2 residues coordinate ATP: D514 and G551. N552 lines the Mg(2+) pocket. Substrate is bound at residue S554.

Belongs to the FGAMS family. As to quaternary structure, monomer. Part of the FGAM synthase complex composed of 1 PurL, 1 PurQ and 2 PurS subunits.

It localises to the cytoplasm. The enzyme catalyses N(2)-formyl-N(1)-(5-phospho-beta-D-ribosyl)glycinamide + L-glutamine + ATP + H2O = 2-formamido-N(1)-(5-O-phospho-beta-D-ribosyl)acetamidine + L-glutamate + ADP + phosphate + H(+). It participates in purine metabolism; IMP biosynthesis via de novo pathway; 5-amino-1-(5-phospho-D-ribosyl)imidazole from N(2)-formyl-N(1)-(5-phospho-D-ribosyl)glycinamide: step 1/2. In terms of biological role, part of the phosphoribosylformylglycinamidine synthase complex involved in the purines biosynthetic pathway. Catalyzes the ATP-dependent conversion of formylglycinamide ribonucleotide (FGAR) and glutamine to yield formylglycinamidine ribonucleotide (FGAM) and glutamate. The FGAM synthase complex is composed of three subunits. PurQ produces an ammonia molecule by converting glutamine to glutamate. PurL transfers the ammonia molecule to FGAR to form FGAM in an ATP-dependent manner. PurS interacts with PurQ and PurL and is thought to assist in the transfer of the ammonia molecule from PurQ to PurL. The protein is Phosphoribosylformylglycinamidine synthase subunit PurL of Gloeobacter violaceus (strain ATCC 29082 / PCC 7421).